Consider the following 201-residue polypeptide: dCTP deaminase, dUMP-forming (201 aa).

DCTP contacts are provided by residues 101-106 (KSSLGR), Asp119, 127-129 (TLE), Gln148, Tyr162, and Gln174. Catalysis depends on Glu129, which acts as the Proton donor/acceptor. Positions 166–183 (EYSSRYQGQRGPTASRSF) are enriched in polar residues. The tract at residues 166–201 (EYSSRYQGQRGPTASRSFLNFHRTDVSGTEAGRSSS) is disordered.

The protein belongs to the dCTP deaminase family. In terms of assembly, homotrimer.

It catalyses the reaction dCTP + 2 H2O = dUMP + NH4(+) + diphosphate. It functions in the pathway pyrimidine metabolism; dUMP biosynthesis; dUMP from dCTP: step 1/1. Functionally, bifunctional enzyme that catalyzes both the deamination of dCTP to dUTP and the hydrolysis of dUTP to dUMP without releasing the toxic dUTP intermediate. The protein is dCTP deaminase, dUMP-forming of Leifsonia xyli subsp. xyli (strain CTCB07).